A 327-amino-acid chain; its full sequence is Homeotic protein distal-less (327 aa).

Residues 124–183 (MRKPRTIYSSLQLQQLNRRFQRTQYLALPERAELAASLGLTQTQVKIWFQNRRSKYKKMM) constitute a DNA-binding region (homeobox). Positions 181–303 (KMMKAAQGPG…THHHNPPPQM (123 aa)) are disordered. Low complexity predominate over residues 231-249 (LPPGHSPTPSSTPVSELSP). Residues 266–275 (QKPHWIDHKP) are compositionally biased toward basic and acidic residues. Residues 276–286 (PPQMTPQPPHP) are compositionally biased toward pro residues.

As to expression, expressed in the embryo in limb primordia of the head and thoracic segments. Expressed in regions of the larval leg, wing, antennal and haltere disks that form the distal-most regions of the mature structures (in the leg this corresponds to the tarsus and the distal tibia). Found in the optic center of the developing larval brain.

Its subcellular location is the nucleus. In terms of biological role, transcription factor that plays a role in larval and adult appendage development. Specifies the identity of ventral appendages (including legs and antennae) and suppresses dorsal appendage development. Involved in patterning the distal-proximal limb axis. May control the adhesive properties of cells during limb morphogenesis. Also has a secondary role in the normal patterning of the wing margin. The chain is Homeotic protein distal-less (Dll) from Drosophila melanogaster (Fruit fly).